The following is a 48-amino-acid chain: Ribulose bisphosphate carboxylase large chain (48 aa).

This sequence belongs to the RuBisCO large chain family. Type I subfamily. In terms of assembly, heterohexadecamer of 8 large chains and 8 small chains.

It localises to the plastid. The protein localises to the chloroplast. The catalysed reaction is 2 (2R)-3-phosphoglycerate + 2 H(+) = D-ribulose 1,5-bisphosphate + CO2 + H2O. It carries out the reaction D-ribulose 1,5-bisphosphate + O2 = 2-phosphoglycolate + (2R)-3-phosphoglycerate + 2 H(+). RuBisCO catalyzes two reactions: the carboxylation of D-ribulose 1,5-bisphosphate, the primary event in carbon dioxide fixation, as well as the oxidative fragmentation of the pentose substrate in the photorespiration process. Both reactions occur simultaneously and in competition at the same active site. The sequence is that of Ribulose bisphosphate carboxylase large chain (rbcL) from Pinus pinaster (Maritime pine).